A 213-amino-acid polypeptide reads, in one-letter code: Dimethylamine corrinoid protein 3 (213 aa).

In terms of domain architecture, B12-binding N-terminal spans 1–91; it reads MADIEGLLHE…DLPAGAEKKL (91 aa). In terms of domain architecture, B12-binding spans 92–213; the sequence is GVIVNGTVEG…AVAKAKELLL (122 aa). His-104 contacts methylcob(III)alamin.

The protein belongs to the methylamine corrinoid protein family.

It functions in the pathway one-carbon metabolism; methanogenesis from dimethylamine. In terms of biological role, acts as a methyl group carrier between MtbB and MtbA. The chain is Dimethylamine corrinoid protein 3 (mtbC3) from Methanosarcina acetivorans (strain ATCC 35395 / DSM 2834 / JCM 12185 / C2A).